The chain runs to 129 residues: Small ribosomal subunit protein uS9 (129 aa).

It belongs to the universal ribosomal protein uS9 family.

This Chlorobium phaeovibrioides (strain DSM 265 / 1930) (Prosthecochloris vibrioformis (strain DSM 265)) protein is Small ribosomal subunit protein uS9.